The primary structure comprises 293 residues: Formamidopyrimidine-DNA glycosylase (293 aa).

Pro-2 acts as the Schiff-base intermediate with DNA in catalysis. Glu-3 serves as the catalytic Proton donor. Lys-60 (proton donor; for beta-elimination activity) is an active-site residue. Residues His-110, Arg-129, and Arg-174 each contribute to the DNA site. An FPG-type zinc finger spans residues 259–293 (NVYRRTGKECRKCGNLIEKQKIAGRSTHWCPNCQK). The active-site Proton donor; for delta-elimination activity is the Arg-283.

It belongs to the FPG family. Monomer. The cofactor is Zn(2+).

The enzyme catalyses Hydrolysis of DNA containing ring-opened 7-methylguanine residues, releasing 2,6-diamino-4-hydroxy-5-(N-methyl)formamidopyrimidine.. It catalyses the reaction 2'-deoxyribonucleotide-(2'-deoxyribose 5'-phosphate)-2'-deoxyribonucleotide-DNA = a 3'-end 2'-deoxyribonucleotide-(2,3-dehydro-2,3-deoxyribose 5'-phosphate)-DNA + a 5'-end 5'-phospho-2'-deoxyribonucleoside-DNA + H(+). Involved in base excision repair of DNA damaged by oxidation or by mutagenic agents. Acts as a DNA glycosylase that recognizes and removes damaged bases. Has a preference for oxidized purines, such as 7,8-dihydro-8-oxoguanine (8-oxoG). Has AP (apurinic/apyrimidinic) lyase activity and introduces nicks in the DNA strand. Cleaves the DNA backbone by beta-delta elimination to generate a single-strand break at the site of the removed base with both 3'- and 5'-phosphates. The sequence is that of Formamidopyrimidine-DNA glycosylase from Prochlorococcus marinus (strain MIT 9312).